The following is an 856-amino-acid chain: Glucans biosynthesis glucosyltransferase H (856 aa).

The next 6 helical transmembrane spans lie at 144 to 164, 198 to 218, 517 to 537, 574 to 594, 608 to 628, and 691 to 711; these read ILLVLMLGQTIVAGWYMKGIM, ILIMFGILFCWVSAGFWTALM, VFLTGVMSYLSAPLWFFFLVL, LFSTTIVLLFLPKLLSIILIW, TLSMLLEMLFSMLLAPVRMIF, and IVGSLMLSIPVSVISSRVGLG.

This sequence belongs to the glycosyltransferase 2 family. OpgH subfamily.

The protein localises to the cell inner membrane. It participates in glycan metabolism; osmoregulated periplasmic glucan (OPG) biosynthesis. Its function is as follows. Involved in the biosynthesis of osmoregulated periplasmic glucans (OPGs). The protein is Glucans biosynthesis glucosyltransferase H of Pseudomonas fluorescens (strain Pf0-1).